A 782-amino-acid polypeptide reads, in one-letter code: LINE-1 type transposase domain-containing protein 1 (782 aa).

Disordered regions lie at residues 1 to 30 (MSGV…TATS), 90 to 200 (QEGD…GGAG), and 338 to 397 (NKGT…SAEE). 2 stretches are compositionally biased toward basic and acidic residues: residues 11–27 (LQKE…ERKT) and 95–107 (ISER…KVEE). Ser136 carries the phosphoserine modification. Composition is skewed to basic and acidic residues over residues 143-158 (SLER…HGRC) and 183-194 (EENRLKAPKESP). Acidic residues predominate over residues 347 to 396 (GEEEEISETQGEETSEGETSELGEEEGSESEEEEESSESEEEEESSESAE). Phosphoserine is present on residues Ser407, Ser409, Ser442, Ser478, Ser490, Ser559, and Ser567.

It belongs to the transposase 22 family.

The protein is LINE-1 type transposase domain-containing protein 1 (L1td1) of Mus musculus (Mouse).